Here is a 444-residue protein sequence, read N- to C-terminus: MGDFLASIWWMIVSFSVLVTFHEFGHYWVARRCGVKVLRFSIGFGTPLWSRRSSSGTEFVIGAIPLGGYVKMLDEREADVTVAERNQAFNRKSVWQRIAIVAAGPLANLLLCMLLLWVLFVIGKQDYSATVGRAEHLAAQAGIHPGDRITAIDGRQVTSWSEASMLLTAAAMDRQNAVLSVIGPYGERSEHTLELSKLKQPFDERHVTALVGINWQFMLQPPIIAKIEPGSIAEGAIKPGDIVLAVDGQQTLSTEDLYNQIQKLGRDGHPGMIEIRRGEERLALELSPRKSAQGVWLLGVKTNPGPVPAFDSQQRYGVLAAVPLAIRETARMTADSLGMMKRIITGQASAKNISGPISIAKIANASAKRGVGWFIYFLSLLSLSLAIINLFPIPILDGGHLLYYAIELLKGSPLSTRAMAAGQYIGLALLAGLMGLAFYNDLLG.

His22 is a binding site for Zn(2+). Residue Glu23 is part of the active site. His26 is a Zn(2+) binding site. A helical membrane pass occupies residues 98–120 (IAIVAAGPLANLLLCMLLLWVLF). The PDZ domain maps to 192 to 278 (TLELSKLKQP…HPGMIEIRRG (87 aa)). Transmembrane regions (helical) follow at residues 371-393 (VGWF…LFPI) and 418-440 (AMAA…AFYN).

The protein belongs to the peptidase M50B family. Zn(2+) is required as a cofactor.

It localises to the cell inner membrane. The sequence is that of Putative zinc metalloprotease PD_0327 from Xylella fastidiosa (strain Temecula1 / ATCC 700964).